Here is a 443-residue protein sequence, read N- to C-terminus: Tubulin beta-2 chain (443 aa).

The short motif at 1-4 is the MREI motif element; the sequence is MREI. GTP contacts are provided by Gln11, Glu69, Ser138, Gly142, Thr143, Gly144, Asn204, and Asn226. Glu69 is a Mg(2+) binding site. At Glu438 the chain carries 5-glutamyl polyglutamate.

This sequence belongs to the tubulin family. In terms of assembly, dimer of alpha and beta chains. A typical microtubule is a hollow water-filled tube with an outer diameter of 25 nm and an inner diameter of 15 nM. Alpha-beta heterodimers associate head-to-tail to form protofilaments running lengthwise along the microtubule wall with the beta-tubulin subunit facing the microtubule plus end conferring a structural polarity. Microtubules usually have 13 protofilaments but different protofilament numbers can be found in some organisms and specialized cells. It depends on Mg(2+) as a cofactor. Post-translationally, some glutamate residues at the C-terminus are polyglycylated, resulting in polyglycine chains on the gamma-carboxyl group. Glycylation is mainly limited to tubulin incorporated into axonemes (cilia and flagella) whereas glutamylation is prevalent in neuronal cells, centrioles, axonemes, and the mitotic spindle. Both modifications can coexist on the same protein on adjacent residues, and lowering polyglycylation levels increases polyglutamylation, and reciprocally. The precise function of polyglycylation is still unclear. Some glutamate residues at the C-terminus are polyglutamylated, resulting in polyglutamate chains on the gamma-carboxyl group. Polyglutamylation plays a key role in microtubule severing by spastin (SPAST). SPAST preferentially recognizes and acts on microtubules decorated with short polyglutamate tails: severing activity by SPAST increases as the number of glutamates per tubulin rises from one to eight, but decreases beyond this glutamylation threshold. Nervous system specific.

The protein localises to the cytoplasm. Its subcellular location is the cytoskeleton. In terms of biological role, tubulin is the major constituent of microtubules, a cylinder consisting of laterally associated linear protofilaments composed of alpha- and beta-tubulin heterodimers. Microtubules grow by the addition of GTP-tubulin dimers to the microtubule end, where a stabilizing cap forms. Below the cap, tubulin dimers are in GDP-bound state, owing to GTPase activity of alpha-tubulin. The polypeptide is Tubulin beta-2 chain (tubb2) (Xenopus laevis (African clawed frog)).